The primary structure comprises 457 residues: MWGGRFSEATDSFVAAFTASVGFDQRFARHDIQGSIAHATMLKECSILEADDVATIIDGLQQVLREIEAGEFNWSIALEDVHMNVESRLTDIVGAVGKKLHTGRSRNDQVATDIRLWLREETDNIIALLVRLQSGLLDLAEQHTDTIMPGFTHLQTAQPVSFGHHVMAWFEMLYRDTERLVDARRRINQMPLGSAALAGTTFPIDRTITAELLGFEGICQNSLDAVSDRDFAIEFTSAASILMMHMSRMSEEIILWMSAQFNFVQIPDRFCTGSSIMPQKKNPDVPELVRGKAARVFGQLMTLLSLMKSQPLAYNKDNQEDKEPLFDCVDTLTGSLLAFADMLPNITPNKENMRAATMKGYATATDLADYLVRNGVAFRDAHEVVGNAVALGIKEGVDLSDLSLAQLQQFSNAIGDDVFDFLTLEGSLAARDHLGGTAPNQVKQAISRGRTRLEVFA.

The protein belongs to the lyase 1 family. Argininosuccinate lyase subfamily.

It is found in the cytoplasm. It carries out the reaction 2-(N(omega)-L-arginino)succinate = fumarate + L-arginine. Its pathway is amino-acid biosynthesis; L-arginine biosynthesis; L-arginine from L-ornithine and carbamoyl phosphate: step 3/3. The chain is Argininosuccinate lyase from Psychrobacter arcticus (strain DSM 17307 / VKM B-2377 / 273-4).